Consider the following 175-residue polypeptide: NADH-ubiquinone oxidoreductase chain 6 (175 aa).

Transmembrane regions (helical) follow at residues 1–21 (MMTYIVFILSIIFVMGFVGFS), 25–45 (SPIYGGLGLIVSGGVGCGIVL), 47–67 (FGGSFLGLMVFLIYLGGMMVV), 88–108 (VVLGTFITGLLMEFLMVYYVL), and 149–169 (YGTWLVIVTGWSLLIGVVVIM).

It belongs to the complex I subunit 6 family. Core subunit of respiratory chain NADH dehydrogenase (Complex I) which is composed of 45 different subunits.

The protein resides in the mitochondrion inner membrane. The catalysed reaction is a ubiquinone + NADH + 5 H(+)(in) = a ubiquinol + NAD(+) + 4 H(+)(out). Core subunit of the mitochondrial membrane respiratory chain NADH dehydrogenase (Complex I) which catalyzes electron transfer from NADH through the respiratory chain, using ubiquinone as an electron acceptor. Essential for the catalytic activity and assembly of complex I. The sequence is that of NADH-ubiquinone oxidoreductase chain 6 (MT-ND6) from Ovis aries (Sheep).